A 220-amino-acid polypeptide reads, in one-letter code: Ribosomal RNA large subunit methyltransferase E (220 aa).

5 residues coordinate S-adenosyl-L-methionine: Gly-60, Trp-62, Asp-92, Asp-108, and Asp-133. The active-site Proton acceptor is Lys-173.

Belongs to the class I-like SAM-binding methyltransferase superfamily. RNA methyltransferase RlmE family.

The protein resides in the cytoplasm. The catalysed reaction is uridine(2552) in 23S rRNA + S-adenosyl-L-methionine = 2'-O-methyluridine(2552) in 23S rRNA + S-adenosyl-L-homocysteine + H(+). Its function is as follows. Specifically methylates the uridine in position 2552 of 23S rRNA at the 2'-O position of the ribose in the fully assembled 50S ribosomal subunit. This chain is Ribosomal RNA large subunit methyltransferase E, found in Paraburkholderia xenovorans (strain LB400).